We begin with the raw amino-acid sequence, 145 residues long: Maximins 3/H9 type 1 (145 aa).

The first 18 residues, 1–18, serve as a signal peptide directing secretion; that stretch reads MNFKYIVAVSFLIASAYA. 2 propeptides span residues 19–43 and 74–124; these read RSVQNDEQSLSQRDVLEEEESLREI and RTAE…KEKR. Ile-144 carries the post-translational modification Isoleucine amide.

Belongs to the bombinin family. In terms of tissue distribution, expressed by the skin glands.

The protein localises to the secreted. Functionally, maximin-3 shows antibacterial activity against both Gram-positive and Gram-negative bacteria. It also shows antimicrobial activity against the fungus C.albicans, but not against A.flavus nor P.uticale. It has little hemolytic activity. It possess a significant cytotoxicity against tumor cell lines. It possess a significant anti-HIV activity. It shows high spermicidal activity. In terms of biological role, maximin-H9 shows antimicrobial activity against bacteria and against the fungus C.albicans. Shows strong hemolytic activity. The polypeptide is Maximins 3/H9 type 1 (Bombina maxima (Giant fire-bellied toad)).